We begin with the raw amino-acid sequence, 113 residues long: uncharacterized protein (113 aa).

A disordered region spans residues 94 to 113 (SKTGLDEQAHVQKAHDVQDV). A compositionally biased stretch (basic and acidic residues) spans 96 to 113 (TGLDEQAHVQKAHDVQDV).

It belongs to the geminiviridae protein AV2/V2 family. In terms of assembly, interacts with host SGS3.

The protein resides in the host cytoplasm. It is found in the host perinuclear region. Its function is as follows. Through its interaction with host SGS3, acts as a suppressor of RNA-mediated gene silencing, also known as post-transcriptional gene silencing (PTGS), a mechanism of plant viral defense that limits the accumulation of viral RNAs. This is an uncharacterized protein from African cassava mosaic virus (isolate Nigerian) (ACMV).